Consider the following 117-residue polypeptide: Putative pterin-4-alpha-carbinolamine dehydratase (117 aa).

It belongs to the pterin-4-alpha-carbinolamine dehydratase family.

It catalyses the reaction (4aS,6R)-4a-hydroxy-L-erythro-5,6,7,8-tetrahydrobiopterin = (6R)-L-erythro-6,7-dihydrobiopterin + H2O. The polypeptide is Putative pterin-4-alpha-carbinolamine dehydratase (Azoarcus sp. (strain BH72)).